The primary structure comprises 628 residues: Neutral/alkaline invertase 1, mitochondrial (628 aa).

The N-terminal 35 residues, 1–35 (MAAAAISHLRRGAPRHARALLYLSTRRFSSSSAAG), are a transit peptide targeting the mitochondrion. Residues 79–90 (ASSAPPLESPPI) show a composition bias toward low complexity. A disordered region spans residues 79 to 113 (ASSAPPLESPPIEELPDDATPPPEEEPGLPAPEKD).

The protein belongs to the glycosyl hydrolase 100 family. In terms of tissue distribution, expressed in roots, leaf and stems.

The protein resides in the mitochondrion. The enzyme catalyses Hydrolysis of terminal non-reducing beta-D-fructofuranoside residues in beta-D-fructofuranosides.. Mitochondrial invertase that cleaves sucrose into glucose and fructose. This chain is Neutral/alkaline invertase 1, mitochondrial, found in Oryza sativa subsp. japonica (Rice).